Consider the following 258-residue polypeptide: Tryptophan synthase alpha chain (258 aa).

Residues E47 and D58 each act as proton acceptor in the active site.

Belongs to the TrpA family. Tetramer of two alpha and two beta chains.

It catalyses the reaction (1S,2R)-1-C-(indol-3-yl)glycerol 3-phosphate + L-serine = D-glyceraldehyde 3-phosphate + L-tryptophan + H2O. It participates in amino-acid biosynthesis; L-tryptophan biosynthesis; L-tryptophan from chorismate: step 5/5. The alpha subunit is responsible for the aldol cleavage of indoleglycerol phosphate to indole and glyceraldehyde 3-phosphate. This is Tryptophan synthase alpha chain from Bacillus cereus (strain ATCC 10987 / NRS 248).